We begin with the raw amino-acid sequence, 346 residues long: Galanin receptor type 1 (346 aa).

The Extracellular portion of the chain corresponds to 1 to 33; that stretch reads MELAPVNLSEGNGSDPEPPAEPRPLFGIGVENF. N7 and N12 each carry an N-linked (GlcNAc...) asparagine glycan. Residues 34 to 54 form a helical membrane-spanning segment; it reads ITLVVFGLIFAMGVLGNSLVI. Over 55 to 69 the chain is Cytoplasmic; that stretch reads TVLARSKPGKPRSTT. Residues 70–90 traverse the membrane as a helical segment; sequence NLFILNLSIADLAYLLFCIPF. Over 91 to 108 the chain is Extracellular; sequence QATVYALPTWVLGAFICK. An intrachain disulfide couples C107 to C185. The helical transmembrane segment at 109–130 threads the bilayer; sequence FIHYFFTVSMLVSIFTLAAMSV. At 131–150 the chain is on the cytoplasmic side; sequence DRYVAIVHSRRSSSLRVSRN. Residues 151–171 traverse the membrane as a helical segment; the sequence is ALLGVGFIWALSIAMASPVAY. Over 172 to 196 the chain is Extracellular; sequence YQRLFHRDSNQTFCWEHWPNQLHKK. N-linked (GlcNAc...) asparagine glycosylation is present at N181. The helical transmembrane segment at 197–217 threads the bilayer; sequence AYVVCTFVFGYLLPLLLICFC. Over 218 to 246 the chain is Cytoplasmic; it reads YAKVLNHLHKKLKNMSKKSEASKKKTAQT. Residues 247–267 form a helical membrane-spanning segment; sequence VLVVVVVFGISWLPHHVIHLW. Topologically, residues 268–269 are extracellular; that stretch reads AE. A helical transmembrane segment spans residues 270 to 290; the sequence is FGAFPLTPASFFFRITAHCLA. Residues 291-346 are Cytoplasmic-facing; it reads YSNSSVNPIIYAFLSENFRKAYKQVFKCRVCNESPHGDAKEKNRIDTPPSTNCTHV. The S-palmitoyl cysteine moiety is linked to residue C318. Positions 326–335 are enriched in basic and acidic residues; it reads HGDAKEKNRI. A disordered region spans residues 326-346; sequence HGDAKEKNRIDTPPSTNCTHV.

The protein belongs to the G-protein coupled receptor 1 family. As to quaternary structure, interacts with GRP39 AND HTR1A. In terms of processing, three cysteine residues are found in the C-terminus, at least one of which may be palmitoylated. In terms of tissue distribution, spinal cord, small intestine, Rin14B insulinoma cells and several brain regions, particularly ventral hippocampus, amygdala, supraoptic nucleus, hypothalamus, thalamus, lateral parabrachial nucleus and locus coeruleus.

The protein localises to the cell membrane. In terms of biological role, receptor for the hormone galanin. The activity of this receptor is mediated by G proteins that inhibit adenylate cyclase activity. This is Galanin receptor type 1 (Galr1) from Rattus norvegicus (Rat).